Reading from the N-terminus, the 334-residue chain is Lipoyl synthase (334 aa).

Residues 8 to 33 form a disordered region; that stretch reads LNNDTRPKVEAPARPRHPEKAHRPDT. Positions 12 to 33 are enriched in basic and acidic residues; the sequence is TRPKVEAPARPRHPEKAHRPDT. [4Fe-4S] cluster-binding residues include Cys-68, Cys-73, Cys-79, Cys-94, Cys-98, Cys-101, and Ser-307. Residues 80 to 296 form the Radical SAM core domain; the sequence is WEKRHATFMI…ETTAYAKGFL (217 aa).

The protein belongs to the radical SAM superfamily. Lipoyl synthase family. [4Fe-4S] cluster serves as cofactor.

The protein localises to the cytoplasm. The catalysed reaction is [[Fe-S] cluster scaffold protein carrying a second [4Fe-4S](2+) cluster] + N(6)-octanoyl-L-lysyl-[protein] + 2 oxidized [2Fe-2S]-[ferredoxin] + 2 S-adenosyl-L-methionine + 4 H(+) = [[Fe-S] cluster scaffold protein] + N(6)-[(R)-dihydrolipoyl]-L-lysyl-[protein] + 4 Fe(3+) + 2 hydrogen sulfide + 2 5'-deoxyadenosine + 2 L-methionine + 2 reduced [2Fe-2S]-[ferredoxin]. It functions in the pathway protein modification; protein lipoylation via endogenous pathway; protein N(6)-(lipoyl)lysine from octanoyl-[acyl-carrier-protein]: step 2/2. Its function is as follows. Catalyzes the radical-mediated insertion of two sulfur atoms into the C-6 and C-8 positions of the octanoyl moiety bound to the lipoyl domains of lipoate-dependent enzymes, thereby converting the octanoylated domains into lipoylated derivatives. This is Lipoyl synthase from Methylorubrum populi (strain ATCC BAA-705 / NCIMB 13946 / BJ001) (Methylobacterium populi).